We begin with the raw amino-acid sequence, 91 residues long: Probable Fe(2+)-trafficking protein (91 aa).

The protein belongs to the Fe(2+)-trafficking protein family.

Could be a mediator in iron transactions between iron acquisition and iron-requiring processes, such as synthesis and/or repair of Fe-S clusters in biosynthetic enzymes. The polypeptide is Probable Fe(2+)-trafficking protein (Paraburkholderia phytofirmans (strain DSM 17436 / LMG 22146 / PsJN) (Burkholderia phytofirmans)).